Consider the following 61-residue polypeptide: Small ribosomal subunit protein uS14 (61 aa).

Zn(2+) contacts are provided by C24, C27, C40, and C43.

It belongs to the universal ribosomal protein uS14 family. Zinc-binding uS14 subfamily. Part of the 30S ribosomal subunit. Contacts proteins S3 and S10. Requires Zn(2+) as cofactor.

In terms of biological role, binds 16S rRNA, required for the assembly of 30S particles and may also be responsible for determining the conformation of the 16S rRNA at the A site. The chain is Small ribosomal subunit protein uS14 from Nautilia profundicola (strain ATCC BAA-1463 / DSM 18972 / AmH).